The sequence spans 546 residues: CTP synthase (546 aa).

Positions 1 to 264 (MRYIVVTGGV…TKYIMKAMRL (264 aa)) are amidoligase domain. Residue Ser-12 participates in CTP binding. Ser-12 contacts UTP. ATP is bound by residues 13–18 (GLGKGI) and Asp-70. Asp-70 and Glu-140 together coordinate Mg(2+). Residues 147-149 (DIE), 185-190 (KTKPTQ), and Lys-221 each bind CTP. Residues 185-190 (KTKPTQ) and Lys-221 each bind UTP. The Glutamine amidotransferase type-1 domain maps to 298 to 534 (GSQCTDPMKD…VEAMKAQRLR (237 aa)). Gly-357 contributes to the L-glutamine binding site. Cys-384 serves as the catalytic Nucleophile; for glutamine hydrolysis. Residues 385 to 388 (FGMQ), Glu-408, and Arg-464 each bind L-glutamine. Active-site residues include His-507 and Glu-509.

Belongs to the CTP synthase family. Homotetramer.

The enzyme catalyses UTP + L-glutamine + ATP + H2O = CTP + L-glutamate + ADP + phosphate + 2 H(+). It carries out the reaction L-glutamine + H2O = L-glutamate + NH4(+). It catalyses the reaction UTP + NH4(+) + ATP = CTP + ADP + phosphate + 2 H(+). The protein operates within pyrimidine metabolism; CTP biosynthesis via de novo pathway; CTP from UDP: step 2/2. Allosterically activated by GTP, when glutamine is the substrate; GTP has no effect on the reaction when ammonia is the substrate. The allosteric effector GTP functions by stabilizing the protein conformation that binds the tetrahedral intermediate(s) formed during glutamine hydrolysis. Inhibited by the product CTP, via allosteric rather than competitive inhibition. Its function is as follows. Catalyzes the ATP-dependent amination of UTP to CTP with either L-glutamine or ammonia as the source of nitrogen. Regulates intracellular CTP levels through interactions with the four ribonucleotide triphosphates. The sequence is that of CTP synthase from Methanothrix thermoacetophila (strain DSM 6194 / JCM 14653 / NBRC 101360 / PT) (Methanosaeta thermophila).